The chain runs to 582 residues: Regulatory solute carrier protein family 1 member 1 (582 aa).

Disordered regions lie at residues M1 to V32, K56 to L76, E143 to D180, V303 to P325, V363 to R384, L390 to G409, A426 to R452, and S483 to P529. A compositionally biased stretch (polar residues) spans S16–V32. Over residues P148–Q179 the composition is skewed to polar residues. Residues L390–S408 are compositionally biased toward polar residues. Composition is skewed to basic and acidic residues over residues S438–R452 and P490–E503. The UBA domain maps to I536–K576.

Interacts with YRDC. As to expression, expressed in epithelial and subepithelial cells of small intestine.

It localises to the cell membrane. The protein localises to the nucleus. Its subcellular location is the golgi apparatus. The protein resides in the trans-Golgi network. Mediates transcriptional and post-transcriptional regulation of SLC5A1. Inhibits a dynamin and PKC-dependent exocytotic pathway of SLC5A1. Also involved in transcriptional regulation of SLC22A2. Exhibits glucose-dependent, short-term inhibition of SLC5A1 and SLC22A2 by inhibiting the release of vesicles from the trans-Golgi network. Regulates the expression of SLC5A1 in a tissue-specific manner and is specifically involved in its regulation in the small intestine. This is Regulatory solute carrier protein family 1 member 1 (Rsc1a1) from Mus musculus (Mouse).